Reading from the N-terminus, the 269-residue chain is MEDKNSVIVFKNVSFQYQSDASFTLKDVSFNIPKGQWTSIVGHNGSGKSTIAKLMIGIEKVKSGEIFYNNQAITDDNFEKLRKDIGIVFQNPDNQFVGSIVKYDVAFGLENHAVPHDEMHRRVSEALKQVDMLERADYEPNALSGGQKQRVAIASVLALNPSVIILDEATSMLDPDARQNLLDLVRKVKSEHNITIISITHDLSEAMEADHVIVMNKGTVYKEGTATEIFDHAEELTRIGLDLPFPIKINQMLGHQTSFLTYEGLVDQL.

One can recognise an ABC transporter domain in the interval 8–242; sequence IVFKNVSFQY…AEELTRIGLD (235 aa). 42 to 49 is a binding site for ATP; it reads GHNGSGKS.

It belongs to the ABC transporter superfamily. Energy-coupling factor EcfA family. Forms a stable energy-coupling factor (ECF) transporter complex composed of 2 membrane-embedded substrate-binding proteins (S component), 2 ATP-binding proteins (A component) and 2 transmembrane proteins (T component).

It localises to the cell membrane. Its function is as follows. ATP-binding (A) component of a common energy-coupling factor (ECF) ABC-transporter complex. Unlike classic ABC transporters this ECF transporter provides the energy necessary to transport a number of different substrates. The polypeptide is Energy-coupling factor transporter ATP-binding protein EcfA1 (Staphylococcus aureus (strain Mu50 / ATCC 700699)).